The primary structure comprises 425 residues: Protein CLP1 homolog (425 aa).

ATP-binding positions include glutamate 18, lysine 59, and 121 to 126 (DVGKST).

It belongs to the Clp1 family. Clp1 subfamily.

It localises to the nucleus. Required for endonucleolytic cleavage during polyadenylation-dependent pre-mRNA 3'-end formation. The chain is Protein CLP1 homolog (cbc) from Drosophila mojavensis (Fruit fly).